The chain runs to 290 residues: 33 kDa chaperonin (290 aa).

Cystine bridges form between Cys235–Cys237 and Cys268–Cys271.

It belongs to the HSP33 family. Post-translationally, under oxidizing conditions two disulfide bonds are formed involving the reactive cysteines. Under reducing conditions zinc is bound to the reactive cysteines and the protein is inactive.

Its subcellular location is the cytoplasm. Its function is as follows. Redox regulated molecular chaperone. Protects both thermally unfolding and oxidatively damaged proteins from irreversible aggregation. Plays an important role in the bacterial defense system toward oxidative stress. This Streptococcus pyogenes serotype M4 (strain MGAS10750) protein is 33 kDa chaperonin.